Consider the following 252-residue polypeptide: Oncostatin-M (252 aa).

The N-terminal stretch at 1–25 (MGVLLTQRTLLSLVLALLFPSMASM) is a signal peptide. 2 disulfide bridges follow: Cys-31/Cys-152 and Cys-74/Cys-192. Asn-100 is a glycosylation site (N-linked (GlcNAc...) asparagine). 2 disordered regions span residues 162–184 (TAEP…ASDA) and 213–252 (GESP…QLPR). A glycan (N-linked (GlcNAc...) asparagine) is linked at Asn-217. Residues 218-245 (RSRRHSPHQALRKGVRRTRPSRKGKRLM) show a composition bias toward basic residues. The propeptide occupies 222 to 252 (HSPHQALRKGVRRTRPSRKGKRLMTRGQLPR).

Belongs to the LIF/OSM family. Propeptide processing is not important for receptor binding activity but may be important growth-inhibitory activity.

The protein resides in the secreted. In terms of biological role, growth regulator. Inhibits the proliferation of a number of tumor cell lines. Stimulates proliferation of AIDS-KS cells. It regulates cytokine production, including IL-6, G-CSF and GM-CSF from endothelial cells. Uses both type I OSM receptor (heterodimers composed of LIFR and IL6ST) and type II OSM receptor (heterodimers composed of OSMR and IL6ST). Involved in the maturation of fetal hepatocytes, thereby promoting liver development and regeneration. This chain is Oncostatin-M (OSM), found in Homo sapiens (Human).